The sequence spans 324 residues: Methionyl-tRNA formyltransferase (324 aa).

Residue 112–115 coordinates (6S)-5,6,7,8-tetrahydrofolate; the sequence is SILP.

The protein belongs to the Fmt family.

The enzyme catalyses L-methionyl-tRNA(fMet) + (6R)-10-formyltetrahydrofolate = N-formyl-L-methionyl-tRNA(fMet) + (6S)-5,6,7,8-tetrahydrofolate + H(+). In terms of biological role, attaches a formyl group to the free amino group of methionyl-tRNA(fMet). The formyl group appears to play a dual role in the initiator identity of N-formylmethionyl-tRNA by promoting its recognition by IF2 and preventing the misappropriation of this tRNA by the elongation apparatus. The sequence is that of Methionyl-tRNA formyltransferase from Shewanella loihica (strain ATCC BAA-1088 / PV-4).